We begin with the raw amino-acid sequence, 146 residues long: Leghemoglobin 49 (146 aa).

The region spanning 2-146 (GFTQQQEALV…LATAIKKAMS (145 aa)) is the Globin domain. Y24 and Y29 each carry nitrated tyrosine. S44 serves as a coordination point for heme b. A Phosphoserine modification is found at S44. Position 61 (H61) interacts with O2. Positions 93 and 96 each coordinate heme b. Y134 carries the post-translational modification Nitrated tyrosine.

It belongs to the plant globin family. Monomer. Nitrated in effective nodules and particularly in hypoxic conditions; this mechanism may play a protective role in the symbiosis by buffering toxic peroxynitrite NO(2)(-). Nitration level decrease during nodule senescence. Post-translationally, phosphorylation at Ser-44 disrupts the molecular environment of its porphyrin ring oxygen binding pocket, thus leading to a reduced oxygen consumption and to the delivery of oxygen O(2) to symbiosomes. As to expression, accumulates in root nodules after inoculation by bacteria of the genus Rhizobium.

Its subcellular location is the cytoplasm. The protein resides in the cytosol. The protein localises to the nucleus. Functionally, leghemoglobin that reversibly binds oxygen O(2) through a pentacoordinated heme iron. In root nodules, facilitates the diffusion of oxygen to the bacteroids while preventing the bacterial nitrogenase from being inactivated by buffering dioxygen, nitric oxide and carbon monoxide, and promoting the formation of reactive oxygen species (ROS, e.g. H(2)O(2)). This role is essential for symbiotic nitrogen fixation (SNF). This Vicia faba (Broad bean) protein is Leghemoglobin 49.